A 427-amino-acid chain; its full sequence is 3-phosphoshikimate 1-carboxyvinyltransferase (427 aa).

Residues Lys-22, Ser-23, and Arg-27 each contribute to the 3-phosphoshikimate site. Lys-22 is a phosphoenolpyruvate binding site. Phosphoenolpyruvate-binding residues include Gly-96 and Arg-124. 7 residues coordinate 3-phosphoshikimate: Ser-169, Ser-170, Gln-171, Ser-197, Asp-313, Asn-336, and Lys-340. Gln-171 lines the phosphoenolpyruvate pocket. Asp-313 functions as the Proton acceptor in the catalytic mechanism. Residues Arg-344, Arg-386, and Lys-411 each coordinate phosphoenolpyruvate.

The protein belongs to the EPSP synthase family. Monomer.

The protein resides in the cytoplasm. The enzyme catalyses 3-phosphoshikimate + phosphoenolpyruvate = 5-O-(1-carboxyvinyl)-3-phosphoshikimate + phosphate. It functions in the pathway metabolic intermediate biosynthesis; chorismate biosynthesis; chorismate from D-erythrose 4-phosphate and phosphoenolpyruvate: step 6/7. Catalyzes the transfer of the enolpyruvyl moiety of phosphoenolpyruvate (PEP) to the 5-hydroxyl of shikimate-3-phosphate (S3P) to produce enolpyruvyl shikimate-3-phosphate and inorganic phosphate. This Enterobacter sp. (strain 638) protein is 3-phosphoshikimate 1-carboxyvinyltransferase.